A 217-amino-acid chain; its full sequence is 2-phospho-L-lactate guanylyltransferase (217 aa).

The protein belongs to the CofC family. In terms of assembly, homodimer.

It carries out the reaction (2S)-2-phospholactate + GTP + H(+) = (2S)-lactyl-2-diphospho-5'-guanosine + diphosphate. It participates in cofactor biosynthesis; coenzyme F420 biosynthesis. In terms of biological role, guanylyltransferase that catalyzes the activation of (2S)-2-phospholactate (2-PL) as (2S)-lactyl-2-diphospho-5'-guanosine, via the condensation of 2-PL with GTP. It is involved in the biosynthesis of coenzyme F420, a hydride carrier cofactor. The sequence is that of 2-phospho-L-lactate guanylyltransferase from Halorubrum lacusprofundi (strain ATCC 49239 / DSM 5036 / JCM 8891 / ACAM 34).